The sequence spans 69 residues: Neurotoxin Cex5 (69 aa).

A signal peptide is located at residue alanine 1. One can recognise an LCN-type CS-alpha/beta domain in the interval 2 to 67 (KDGYLVSKST…TYPIPGKSCG (66 aa)). Disulfide bonds link cysteine 13/cysteine 66, cysteine 17/cysteine 42, cysteine 26/cysteine 47, and cysteine 30/cysteine 49. Cysteine 66 carries the cysteine amide modification. The propeptide occupies 67–69 (GKK).

Belongs to the long (4 C-C) scorpion toxin superfamily. Sodium channel inhibitor family. Beta subfamily. As to expression, expressed by the venom gland.

It is found in the secreted. Beta toxins bind voltage-independently at site-4 of sodium channels (Nav) and shift the voltage of activation toward more negative potentials thereby affecting sodium channel activation and promoting spontaneous and repetitive firing. This is Neurotoxin Cex5 from Centruroides exilicauda (Bark scorpion).